The chain runs to 417 residues: NADH-quinone oxidoreductase subunit D (417 aa).

It belongs to the complex I 49 kDa subunit family. NDH-1 is composed of 14 different subunits. Subunits NuoB, C, D, E, F, and G constitute the peripheral sector of the complex.

The protein localises to the cell inner membrane. It catalyses the reaction a quinone + NADH + 5 H(+)(in) = a quinol + NAD(+) + 4 H(+)(out). In terms of biological role, NDH-1 shuttles electrons from NADH, via FMN and iron-sulfur (Fe-S) centers, to quinones in the respiratory chain. The immediate electron acceptor for the enzyme in this species is believed to be ubiquinone. Couples the redox reaction to proton translocation (for every two electrons transferred, four hydrogen ions are translocated across the cytoplasmic membrane), and thus conserves the redox energy in a proton gradient. In Burkholderia mallei (strain NCTC 10247), this protein is NADH-quinone oxidoreductase subunit D.